Here is a 457-residue protein sequence, read N- to C-terminus: Choline kinase alpha (457 aa).

Positions 1 to 86 are disordered; sequence MKTKFCTGGE…PPADEQPEPR (86 aa). Residues 13-32 are compositionally biased toward low complexity; that stretch reads PSPLGLLLSCGSGSAAPAPG. Positions 55 to 80 are enriched in pro residues; that stretch reads LALPPPPPLPLPLPLPQPPPPQPPAD. ATP-binding positions include 117-123, Arg-146, and 207-213; these read RGGLSNM and QFIPSRR. Residue 119–121 participates in phosphocholine binding; it reads GLS. At Lys-247 the chain carries N6-acetyllysine. Ser-279 carries the phosphoserine modification. 2 residues coordinate ATP: Gln-308 and Asp-330.

Belongs to the choline/ethanolamine kinase family. In terms of assembly, homodimer. Heterodimer with CHKB. As to quaternary structure, monomer; acetylation by KAT5 promotes dissociation of the homodimer and monomerization. (Microbial infection) Interacts with PI4KA/PI4KIIIalpha; CHKA bridges PI4KA/PI4KIIIalpha and hepatitis C virus (HCV) non-structural protein 5A (NS5A) and potentiates NS5A-stimulated PI4KA activity, which then facilitates the targeting of the ternary complex to the ER for viral replication. In terms of processing, phosphorylated at Ser-279 by AMPK in response to glucose deprivation, leading to localization to lipid droplets. Post-translationally, acetylated by KAT5 at Lys-247 following phosphorylation by AMPK, leading to monomerization and conversion into a tyrosine-protein kinase.

It is found in the cytoplasm. The protein resides in the cytosol. It localises to the lipid droplet. It catalyses the reaction choline + ATP = phosphocholine + ADP + H(+). The enzyme catalyses ethanolamine + ATP = phosphoethanolamine + ADP + H(+). The catalysed reaction is L-tyrosyl-[protein] + ATP = O-phospho-L-tyrosyl-[protein] + ADP + H(+). The protein operates within phospholipid metabolism; phosphatidylcholine biosynthesis; phosphocholine from choline: step 1/1. It participates in phospholipid metabolism; phosphatidylethanolamine biosynthesis; phosphatidylethanolamine from ethanolamine: step 1/3. Homodimerization or heterodimerization is required for the choline and ethanolamine kinase activities. In terms of biological role, plays a key role in phospholipid biosynthesis by catalyzing the phosphorylation of free choline to phosphocholine, the first step in phosphatidylcholine biosynthesis. Also phosphorylates ethanolamine, thereby contributing to phosphatidylethanolamine biosynthesis. Has higher activity with choline. May contribute to tumor cell growth. This isoform plays a key role in lipolysis of lipid droplets following glucose deprivation. In response to glucose deprivation, phosphorylated by AMPK, promoting localization to lipid droplets. Phosphorylation is followed by acetylation by KAT5, leading to dissociation of the homodimer into a monomer. Monomeric CHKA isoform 1 is converted into a tyrosine-protein kinase, which phosphorylates lipid droplet structural proteins PLIN2 and PLIN3, leading to lipolysis of lipid droplets. The chain is Choline kinase alpha (CHKA) from Homo sapiens (Human).